A 323-amino-acid chain; its full sequence is Ankyrin repeat and SOCS box protein 11 (323 aa).

ANK repeat units lie at residues Ala-64–Leu-93, Asn-97–Gly-126, His-130–Leu-159, His-162–His-191, Gln-195–His-224, and Trp-227–Arg-256. An SOCS box domain is found at Ser-273–Gln-323.

The protein belongs to the ankyrin SOCS box (ASB) family. As to quaternary structure, substrate-recognition component of the ECS(ASB11) complex, composed of ASB11, CUL5, ELOB, ELOC and RNF7/RBX2.

Its subcellular location is the endoplasmic reticulum. It participates in protein modification; protein ubiquitination. Functionally, substrate-recognition component of a cullin-5-RING E3 ubiquitin-protein ligase complex (ECS complex, also named CRL5 complex), which mediates the ubiquitination and subsequent proteasomal degradation of target proteins, such as BIK, DIRAS2 and RPN1. The ECS(ASB11) complex acts as a regulator of the endoplasmic reticulum unfolded protein response by mediating ubiquitination and degradation of BIK. This chain is Ankyrin repeat and SOCS box protein 11, found in Homo sapiens (Human).